Reading from the N-terminus, the 469-residue chain is Glutamate--tRNA ligase (469 aa).

Residues 11–21 (PSPTGFIHLGN) carry the 'HIGH' region motif. Over residues 121–131 (PRYDGTWRPEP) the composition is skewed to basic and acidic residues. The segment at 121-141 (PRYDGTWRPEPGKVLPEPPPG) is disordered. The 'KMSKS' region signature appears at 243 to 247 (KMSKR). ATP is bound at residue Lys246.

The protein belongs to the class-I aminoacyl-tRNA synthetase family. Glutamate--tRNA ligase type 1 subfamily. As to quaternary structure, monomer.

It localises to the cytoplasm. The catalysed reaction is tRNA(Glu) + L-glutamate + ATP = L-glutamyl-tRNA(Glu) + AMP + diphosphate. Functionally, catalyzes the attachment of glutamate to tRNA(Glu) in a two-step reaction: glutamate is first activated by ATP to form Glu-AMP and then transferred to the acceptor end of tRNA(Glu). The protein is Glutamate--tRNA ligase of Burkholderia multivorans (strain ATCC 17616 / 249).